Reading from the N-terminus, the 269-residue chain is Surfeit locus protein 4 (269 aa).

Transmembrane regions (helical) follow at residues 64–84 (FLAT…CVLI), 92–112 (YACF…SILW), 179–199 (FFSI…AIGF), 203–223 (LAAL…NAFW), and 242–262 (TTSV…GVSM). Residues 266–269 (KKEW) carry the Di-lysine motif motif.

Belongs to the SURF4 family.

The protein resides in the endoplasmic reticulum membrane. The protein localises to the endoplasmic reticulum-Golgi intermediate compartment membrane. It is found in the golgi apparatus membrane. In terms of biological role, endoplasmic reticulum cargo receptor that mediates the export of lipoproteins by recruiting cargos into COPII vesicles to facilitate their secretion. Acts as a cargo receptor for lipoproteins bearing both APOB and APOA1, thereby regulating lipoprotein delivery and the maintenance of lipid homeostasis. The polypeptide is Surfeit locus protein 4 (Takifugu rubripes (Japanese pufferfish)).